Reading from the N-terminus, the 268-residue chain is Cytochrome b-c1 complex subunit Rieske-3, mitochondrial (268 aa).

Residues 1 to 56 constitute a mitochondrion transit peptide; that stretch reads MLRIAGRKLSSSAATRSSSAFFTRNPFTFTDDSSSPARSPSPASLASQFLDQFRGF. The Mitochondrial matrix segment spans residues 57 to 105; it reads SSNSVSPAHQTGLVSDLPATVAAIKNPSSKIVYDDSNHERYPPGDPSKR. Residues 106-128 form a helical membrane-spanning segment; that stretch reads AFAYFVLTGGRFVYASLVRLLIL. Residues 129 to 268 lie on the Mitochondrial intermembrane side of the membrane; the sequence is KFVLSMSASK…FMEENKLLIG (140 aa). The 89-residue stretch at 178 to 266 folds into the Rieske domain; it reads INLANSVDLG…YSFMEENKLL (89 aa). Cys211, His213, Cys230, and His233 together coordinate [2Fe-2S] cluster. A disulfide bridge connects residues Cys216 and Cys232.

It belongs to the Rieske iron-sulfur protein family. As to quaternary structure, component of the ubiquinol-cytochrome c oxidoreductase (cytochrome b-c1 complex, complex III, CIII), a multisubunit enzyme composed of 3 respiratory subunits cytochrome b, cytochrome c1 and Rieske protein, 2 core protein subunits, and several low-molecular weight protein subunits. The complex exists as an obligatory dimer and forms supercomplexes (SCs) in the inner mitochondrial membrane with cytochrome c oxidase (complex IV, CIV). The cofactor is [2Fe-2S] cluster. As to expression, high levels are seen in the flowers while a low level expression is seen in the roots, leaves and stems.

The protein resides in the mitochondrion inner membrane. It catalyses the reaction a quinol + 2 Fe(III)-[cytochrome c](out) = a quinone + 2 Fe(II)-[cytochrome c](out) + 2 H(+)(out). Its function is as follows. Component of the ubiquinol-cytochrome c oxidoreductase, a multisubunit transmembrane complex that is part of the mitochondrial electron transport chain which drives oxidative phosphorylation. The respiratory chain contains 3 multisubunit complexes succinate dehydrogenase (complex II, CII), ubiquinol-cytochrome c oxidoreductase (cytochrome b-c1 complex, complex III, CIII) and cytochrome c oxidase (complex IV, CIV), that cooperate to transfer electrons derived from NADH and succinate to molecular oxygen, creating an electrochemical gradient over the inner membrane that drives transmembrane transport and the ATP synthase. The cytochrome b-c1 complex catalyzes electron transfer from ubiquinol to cytochrome c, linking this redox reaction to translocation of protons across the mitochondrial inner membrane, with protons being carried across the membrane as hydrogens on the quinol. In the process called Q cycle, 2 protons are consumed from the matrix, 4 protons are released into the intermembrane space and 2 electrons are passed to cytochrome c. The Rieske protein is a catalytic core subunit containing a [2Fe-2S] iron-sulfur cluster. It cycles between 2 conformational states during catalysis to transfer electrons from the quinol bound in the Q(0) site in cytochrome b to cytochrome c1. The chain is Cytochrome b-c1 complex subunit Rieske-3, mitochondrial from Nicotiana tabacum (Common tobacco).